Reading from the N-terminus, the 314-residue chain is Serine/threonine-protein phosphatase PP2A-4 catalytic subunit (314 aa).

Residues aspartate 62, histidine 64, aspartate 90, and asparagine 122 each coordinate Mn(2+). Histidine 123 functions as the Proton donor in the catalytic mechanism. Mn(2+) is bound by residues histidine 172 and histidine 246.

This sequence belongs to the PPP phosphatase family. PP-2A subfamily. Requires Mn(2+) as cofactor.

It localises to the cytoplasm. The catalysed reaction is O-phospho-L-seryl-[protein] + H2O = L-seryl-[protein] + phosphate. It carries out the reaction O-phospho-L-threonyl-[protein] + H2O = L-threonyl-[protein] + phosphate. The sequence is that of Serine/threonine-protein phosphatase PP2A-4 catalytic subunit (PP2A4) from Oryza sativa subsp. japonica (Rice).